Here is a 395-residue protein sequence, read N- to C-terminus: ATP-dependent RNA helicase eIF4A (395 aa).

Residue S2 is modified to N-acetylserine. The Q motif signature appears at 22-50; the sequence is YKFDDMELDENLLRGVFGYGFEEPSAIQQ. Positions 53-222 constitute a Helicase ATP-binding domain; it reads IMPIIEGHDV…TKFMRNPVRI (170 aa). 66-73 is an ATP binding site; that stretch reads AQSGTGKT. Position 73 is a phosphothreonine (T73). Phosphoserine occurs at positions 77 and 129. T146 is subject to Phosphothreonine. The short motif at 170–173 is the DEAD box element; the sequence is DEAD. Residues 233 to 394 form the Helicase C-terminal domain; sequence GIKQFYVNVE…ELPSDIATLL (162 aa).

The protein belongs to the DEAD box helicase family. eIF4A subfamily. Component of the eIF4F complex, which composition varies with external and internal environmental conditions. It is composed of at least eIF4A, eIF4E and eIF4G.

The protein localises to the cytoplasm. The enzyme catalyses ATP + H2O = ADP + phosphate + H(+). ATP-dependent RNA helicase which is a subunit of the eIF4F complex involved in cap recognition and is required for mRNA binding to ribosome. In the current model of translation initiation, eIF4A unwinds RNA secondary structures in the 5'-UTR of mRNAs which is necessary to allow efficient binding of the small ribosomal subunit, and subsequent scanning for the initiator codon. This Saccharomyces cerevisiae (strain YJM789) (Baker's yeast) protein is ATP-dependent RNA helicase eIF4A (TIF1).